The sequence spans 148 residues: Large-conductance mechanosensitive channel (148 aa).

The next 2 membrane-spanning stretches (helical) occupy residues 15–35 (LDMA…KSLV) and 84–104 (VGVF…VFLL).

The protein belongs to the MscL family. As to quaternary structure, homopentamer.

The protein resides in the cell inner membrane. Its function is as follows. Channel that opens in response to stretch forces in the membrane lipid bilayer. May participate in the regulation of osmotic pressure changes within the cell. In Nitratidesulfovibrio vulgaris (strain DSM 19637 / Miyazaki F) (Desulfovibrio vulgaris), this protein is Large-conductance mechanosensitive channel.